Consider the following 437-residue polypeptide: Amino-acid acetyltransferase (437 aa).

Positions 289-437 (ECIRLATSFD…SKVLMLALDN (149 aa)) constitute an N-acetyltransferase domain.

This sequence belongs to the acetyltransferase family. ArgA subfamily.

It localises to the cytoplasm. The catalysed reaction is L-glutamate + acetyl-CoA = N-acetyl-L-glutamate + CoA + H(+). It functions in the pathway amino-acid biosynthesis; L-arginine biosynthesis; N(2)-acetyl-L-ornithine from L-glutamate: step 1/4. This Haemophilus ducreyi (strain 35000HP / ATCC 700724) protein is Amino-acid acetyltransferase.